The chain runs to 201 residues: GTP cyclohydrolase 1 (201 aa).

Residues cysteine 90, histidine 93, and cysteine 163 each coordinate Zn(2+).

This sequence belongs to the GTP cyclohydrolase I family. Toroid-shaped homodecamer, composed of two pentamers of five dimers.

The catalysed reaction is GTP + H2O = 7,8-dihydroneopterin 3'-triphosphate + formate + H(+). Its pathway is cofactor biosynthesis; 7,8-dihydroneopterin triphosphate biosynthesis; 7,8-dihydroneopterin triphosphate from GTP: step 1/1. In Streptomyces avermitilis (strain ATCC 31267 / DSM 46492 / JCM 5070 / NBRC 14893 / NCIMB 12804 / NRRL 8165 / MA-4680), this protein is GTP cyclohydrolase 1.